Here is a 143-residue protein sequence, read N- to C-terminus: ATP synthase subunit b' (143 aa).

A helical transmembrane segment spans residues 6-26; the sequence is ATLPFMALQFLLLAAVLNAIF.

Belongs to the ATPase B chain family. In terms of assembly, F-type ATPases have 2 components, F(1) - the catalytic core - and F(0) - the membrane proton channel. F(1) has five subunits: alpha(3), beta(3), gamma(1), delta(1), epsilon(1). F(0) has four main subunits: a(1), b(1), b'(1) and c(10-14). The alpha and beta chains form an alternating ring which encloses part of the gamma chain. F(1) is attached to F(0) by a central stalk formed by the gamma and epsilon chains, while a peripheral stalk is formed by the delta, b and b' chains.

It is found in the cellular thylakoid membrane. F(1)F(0) ATP synthase produces ATP from ADP in the presence of a proton or sodium gradient. F-type ATPases consist of two structural domains, F(1) containing the extramembraneous catalytic core and F(0) containing the membrane proton channel, linked together by a central stalk and a peripheral stalk. During catalysis, ATP synthesis in the catalytic domain of F(1) is coupled via a rotary mechanism of the central stalk subunits to proton translocation. In terms of biological role, component of the F(0) channel, it forms part of the peripheral stalk, linking F(1) to F(0). The b'-subunit is a diverged and duplicated form of b found in plants and photosynthetic bacteria. The sequence is that of ATP synthase subunit b' from Nostoc punctiforme (strain ATCC 29133 / PCC 73102).